The chain runs to 360 residues: Histidinol-phosphate aminotransferase (360 aa).

Position 223 is an N6-(pyridoxal phosphate)lysine (K223).

This sequence belongs to the class-II pyridoxal-phosphate-dependent aminotransferase family. Histidinol-phosphate aminotransferase subfamily. As to quaternary structure, homodimer. The cofactor is pyridoxal 5'-phosphate.

The enzyme catalyses L-histidinol phosphate + 2-oxoglutarate = 3-(imidazol-4-yl)-2-oxopropyl phosphate + L-glutamate. It functions in the pathway amino-acid biosynthesis; L-histidine biosynthesis; L-histidine from 5-phospho-alpha-D-ribose 1-diphosphate: step 7/9. The polypeptide is Histidinol-phosphate aminotransferase (hisC) (Bacillus subtilis (strain 168)).